A 445-amino-acid polypeptide reads, in one-letter code: Signal recognition particle 54 kDa protein (445 aa).

Residues 102–109 (GVQGSGKT), 184–188 (DTAGR), and 244–247 (TKMD) contribute to the GTP site.

It belongs to the GTP-binding SRP family. SRP54 subfamily. Part of the signal recognition particle protein translocation system, which is composed of SRP and FtsY. Archaeal SRP consists of a 7S RNA molecule of 300 nucleotides and two protein subunits: SRP54 and SRP19.

Its subcellular location is the cytoplasm. It carries out the reaction GTP + H2O = GDP + phosphate + H(+). In terms of biological role, involved in targeting and insertion of nascent membrane proteins into the cytoplasmic membrane. Binds to the hydrophobic signal sequence of the ribosome-nascent chain (RNC) as it emerges from the ribosomes. The SRP-RNC complex is then targeted to the cytoplasmic membrane where it interacts with the SRP receptor FtsY. The chain is Signal recognition particle 54 kDa protein from Sulfurisphaera tokodaii (strain DSM 16993 / JCM 10545 / NBRC 100140 / 7) (Sulfolobus tokodaii).